A 521-amino-acid polypeptide reads, in one-letter code: GMP synthase [glutamine-hydrolyzing] (521 aa).

Residues 5–197 (KILILDFGSQ…VLDICGAQPG (193 aa)) enclose the Glutamine amidotransferase type-1 domain. The active-site Nucleophile is the Cys81. Catalysis depends on residues His171 and Glu173. Residues 198 to 390 (WTMPNYIEEA…LGLPREMVYR (193 aa)) form the GMPS ATP-PPase domain. An ATP-binding site is contributed by 225-231 (SGGVDSS).

As to quaternary structure, homodimer.

It catalyses the reaction XMP + L-glutamine + ATP + H2O = GMP + L-glutamate + AMP + diphosphate + 2 H(+). The protein operates within purine metabolism; GMP biosynthesis; GMP from XMP (L-Gln route): step 1/1. In terms of biological role, catalyzes the synthesis of GMP from XMP. This Neisseria meningitidis serogroup A / serotype 4A (strain DSM 15465 / Z2491) protein is GMP synthase [glutamine-hydrolyzing] (guaA).